Consider the following 181-residue polypeptide: Oligoribonuclease (181 aa).

Residues 8–171 (LIWIDLEMTG…QDIQESIAEL (164 aa)) enclose the Exonuclease domain. The active site involves Tyr-129.

It belongs to the oligoribonuclease family.

The protein resides in the cytoplasm. Functionally, 3'-to-5' exoribonuclease specific for small oligoribonucleotides. In Shewanella sp. (strain MR-4), this protein is Oligoribonuclease.